The sequence spans 276 residues: Diaminopimelate epimerase (276 aa).

Residues N13, Q46, and N66 each contribute to the substrate site. C75 functions as the Proton donor in the catalytic mechanism. Substrate-binding positions include 76–77, N159, N192, and 210–211; these read GN and ER. C219 functions as the Proton acceptor in the catalytic mechanism. Substrate is bound at residue 220-221; it reads GT.

Belongs to the diaminopimelate epimerase family. In terms of assembly, homodimer.

The protein localises to the cytoplasm. It carries out the reaction (2S,6S)-2,6-diaminopimelate = meso-2,6-diaminopimelate. It functions in the pathway amino-acid biosynthesis; L-lysine biosynthesis via DAP pathway; DL-2,6-diaminopimelate from LL-2,6-diaminopimelate: step 1/1. In terms of biological role, catalyzes the stereoinversion of LL-2,6-diaminopimelate (L,L-DAP) to meso-diaminopimelate (meso-DAP), a precursor of L-lysine and an essential component of the bacterial peptidoglycan. This Pseudomonas aeruginosa (strain UCBPP-PA14) protein is Diaminopimelate epimerase.